The primary structure comprises 251 residues: Malonyl-[acyl-carrier protein] O-methyltransferase (251 aa).

The protein belongs to the methyltransferase superfamily.

It carries out the reaction malonyl-[ACP] + S-adenosyl-L-methionine = malonyl-[ACP] methyl ester + S-adenosyl-L-homocysteine. Its pathway is cofactor biosynthesis; biotin biosynthesis. Functionally, converts the free carboxyl group of a malonyl-thioester to its methyl ester by transfer of a methyl group from S-adenosyl-L-methionine (SAM). It allows to synthesize pimeloyl-ACP via the fatty acid synthetic pathway. The chain is Malonyl-[acyl-carrier protein] O-methyltransferase from Pseudescherichia vulneris (Escherichia vulneris).